The sequence spans 488 residues: Inosine-5'-monophosphate dehydrogenase (488 aa).

2 CBS domains span residues 94-150 (IVSE…SKTV) and 154-215 (MTKK…CKDE). Residues aspartate 249, 249-251 (DSS), and 299-301 (GIG) contribute to the NAD(+) site. K(+) is bound by residues glycine 301 and glycine 303. IMP is bound at residue serine 304. K(+) is bound at residue cysteine 306. Cysteine 306 acts as the Thioimidate intermediate in catalysis. Residues 339–341 (DGG), 362–363 (GS), and 386–390 (YRGMG) contribute to the IMP site. Residue arginine 402 is the Proton acceptor of the active site. Residue glutamate 416 participates in IMP binding. K(+)-binding residues include glutamate 470, serine 471, and histidine 472.

This sequence belongs to the IMPDH/GMPR family. In terms of assembly, homotetramer. It depends on K(+) as a cofactor.

It catalyses the reaction IMP + NAD(+) + H2O = XMP + NADH + H(+). It functions in the pathway purine metabolism; XMP biosynthesis via de novo pathway; XMP from IMP: step 1/1. Mycophenolic acid (MPA) is a non-competitive inhibitor that prevents formation of the closed enzyme conformation by binding to the same site as the amobile flap. In contrast, mizoribine monophosphate (MZP) is a competitive inhibitor that induces the closed conformation. MPA is a potent inhibitor of mammalian IMPDHs but a poor inhibitor of the bacterial enzymes. MZP is a more potent inhibitor of bacterial IMPDH. Its function is as follows. Catalyzes the conversion of inosine 5'-phosphate (IMP) to xanthosine 5'-phosphate (XMP), the first committed and rate-limiting step in the de novo synthesis of guanine nucleotides, and therefore plays an important role in the regulation of cell growth. The protein is Inosine-5'-monophosphate dehydrogenase of Haemophilus influenzae (strain ATCC 51907 / DSM 11121 / KW20 / Rd).